The primary structure comprises 254 residues: N-acetylglucosaminyldiphosphoundecaprenol N-acetyl-beta-D-mannosaminyltransferase (254 aa).

Belongs to the glycosyltransferase 26 family. TagA/TarA subfamily.

It catalyses the reaction UDP-N-acetyl-alpha-D-mannosamine + N-acetyl-alpha-D-glucosaminyl-di-trans,octa-cis-undecaprenyl diphosphate = N-acetyl-beta-D-mannosaminyl-(1-&gt;4)-N-acetyl-alpha-D-glucosaminyl di-trans,octa-cis-undecaprenyl diphosphate + UDP + H(+). It participates in cell wall biogenesis; poly(ribitol phosphate) teichoic acid biosynthesis. Functionally, catalyzes the conversion of GlcNAc-PP-undecaprenol into ManNAc-GlcNAc-PP-undecaprenol, the first committed lipid intermediate in the de novo synthesis of teichoic acid. In Staphylococcus aureus (strain NCTC 8325 / PS 47), this protein is N-acetylglucosaminyldiphosphoundecaprenol N-acetyl-beta-D-mannosaminyltransferase.